The following is a 185-amino-acid chain: Calcium and integrin-binding family member 4 (185 aa).

3 consecutive EF-hand domains span residues 62–95 (RVNP…FSEQ), 97–132 (CPSL…LLKS), and 138–174 (DLLM…SPDF). Positions 110, 112, 114, and 121 each coordinate Ca(2+).

As to quaternary structure, interacts with ITGA2B (via C-terminus cytoplasmic tail region); the interaction is stabilized/increased in a calcium- and magnesium-dependent manner. Expressed weakly in megakaryocytes and endothelial cells.

This is Calcium and integrin-binding family member 4 (Cib4) from Mus musculus (Mouse).